Here is a 63-residue protein sequence, read N- to C-terminus: Protein DsrB (63 aa).

Belongs to the DsrB family.

This chain is Protein DsrB, found in Yersinia pseudotuberculosis serotype O:1b (strain IP 31758).